A 253-amino-acid chain; its full sequence is Purine nucleoside phosphorylase DR_1966 (253 aa).

Zn(2+) contacts are provided by His72, Cys106, and His123.

This sequence belongs to the purine nucleoside phosphorylase YfiH/LACC1 family. In terms of assembly, homodimer. The cofactor is Cu(2+). Zn(2+) is required as a cofactor.

It catalyses the reaction adenosine + phosphate = alpha-D-ribose 1-phosphate + adenine. The catalysed reaction is S-methyl-5'-thioadenosine + phosphate = 5-(methylsulfanyl)-alpha-D-ribose 1-phosphate + adenine. The enzyme catalyses inosine + phosphate = alpha-D-ribose 1-phosphate + hypoxanthine. It carries out the reaction adenosine + H2O + H(+) = inosine + NH4(+). In terms of biological role, purine nucleoside enzyme that catalyzes the phosphorolysis of adenosine and inosine nucleosides, yielding D-ribose 1-phosphate and the respective free bases, adenine and hypoxanthine. Also catalyzes the phosphorolysis of S-methyl-5'-thioadenosine into adenine and S-methyl-5-thio-alpha-D-ribose 1-phosphate. Also has adenosine deaminase activity. This chain is Purine nucleoside phosphorylase DR_1966, found in Deinococcus radiodurans (strain ATCC 13939 / DSM 20539 / JCM 16871 / CCUG 27074 / LMG 4051 / NBRC 15346 / NCIMB 9279 / VKM B-1422 / R1).